The primary structure comprises 553 residues: CTP synthase (553 aa).

The tract at residues 1–277 is amidoligase domain; the sequence is MPTEPETDYD…DQYVMEELDI (277 aa). Ser-26 is a binding site for CTP. Ser-26 is a UTP binding site. ATP-binding positions include 27 to 32 and Asp-84; that span reads GLGKGI. 2 residues coordinate Mg(2+): Asp-84 and Glu-152. Residues 159 to 161, 198 to 203, and Lys-234 each bind CTP; these read DIE and KTKPTQ. Residues 198–203 and Lys-234 each bind UTP; that span reads KTKPTQ. The region spanning 307–544 is the Glutamine amidotransferase type-1 domain; it reads LVGKYDLEDA…LEAVLGDDPH (238 aa). An L-glutamine-binding site is contributed by Gly-364. Cys-391 functions as the Nucleophile; for glutamine hydrolysis in the catalytic mechanism. L-glutamine is bound by residues 392–395, Glu-415, and Arg-472; that span reads LGFQ. Catalysis depends on residues His-517 and Glu-519.

The protein belongs to the CTP synthase family. As to quaternary structure, homotetramer.

The enzyme catalyses UTP + L-glutamine + ATP + H2O = CTP + L-glutamate + ADP + phosphate + 2 H(+). It catalyses the reaction L-glutamine + H2O = L-glutamate + NH4(+). It carries out the reaction UTP + NH4(+) + ATP = CTP + ADP + phosphate + 2 H(+). The protein operates within pyrimidine metabolism; CTP biosynthesis via de novo pathway; CTP from UDP: step 2/2. Allosterically activated by GTP, when glutamine is the substrate; GTP has no effect on the reaction when ammonia is the substrate. The allosteric effector GTP functions by stabilizing the protein conformation that binds the tetrahedral intermediate(s) formed during glutamine hydrolysis. Inhibited by the product CTP, via allosteric rather than competitive inhibition. Functionally, catalyzes the ATP-dependent amination of UTP to CTP with either L-glutamine or ammonia as the source of nitrogen. Regulates intracellular CTP levels through interactions with the four ribonucleotide triphosphates. This Haloarcula marismortui (strain ATCC 43049 / DSM 3752 / JCM 8966 / VKM B-1809) (Halobacterium marismortui) protein is CTP synthase.